A 480-amino-acid chain; its full sequence is Uridine 5'-monophosphate synthase (480 aa).

N-acetylalanine is present on Ala-2. The segment at 2–214 is OPRTase; the sequence is AAADALLGSL…AFVAANPNDS (213 aa). Tyr-37 is subject to Phosphotyrosine. Ser-214 bears the Phosphoserine mark. A domain linker region spans residues 215-220; sequence LPSVKK. Residues 221–480 are OMPdecase; the sequence is EPKELSFGAR…WEAYLSRLAV (260 aa). Ser-257 is a binding site for orotidine 5'-phosphate. Residues Ser-257, Asp-259, and 281 to 283 each bind UMP; that span reads KIH. Orotidine 5'-phosphate is bound by residues Lys-281, Lys-314, Asp-317, Thr-321, Ser-372, 430–432, and 450–451; these read QQY and GR. Active-site for OMPdecase activity residues include Lys-314 and Asp-317. UMP is bound by residues Asp-317, Thr-321, Ser-372, 430-432, and 450-451; these read QQY and GR.

It in the N-terminal section; belongs to the purine/pyrimidine phosphoribosyltransferase family. The protein in the C-terminal section; belongs to the OMP decarboxylase family. As to quaternary structure, homodimer; dimerization is required for enzymatic activity.

It catalyses the reaction orotidine 5'-phosphate + diphosphate = orotate + 5-phospho-alpha-D-ribose 1-diphosphate. The enzyme catalyses orotidine 5'-phosphate + H(+) = UMP + CO2. The protein operates within pyrimidine metabolism; UMP biosynthesis via de novo pathway; UMP from orotate: step 1/2. Its pathway is pyrimidine metabolism; UMP biosynthesis via de novo pathway; UMP from orotate: step 2/2. Its function is as follows. Bifunctional enzyme catalyzing the last two steps of de novo pyrimidine biosynthesis, orotate phosphoribosyltransferase (OPRT), which converts orotate to orotidine-5'-monophosphate (OMP), and orotidine-5'-monophosphate decarboxylase (ODC), the terminal enzymatic reaction that decarboxylates OMP to uridine monophosphate (UMP). This Bos taurus (Bovine) protein is Uridine 5'-monophosphate synthase (UMPS).